We begin with the raw amino-acid sequence, 145 residues long: uncharacterized protein (145 aa).

The helical transmembrane segment at 1–21 threads the bilayer; the sequence is MWFLVKATFWFSLVLVLLPFL. A disordered region spans residues 109–145; it reads TPAESVPSAEATEKAEPAFKRMPVPEHRLDPGPASGK. The segment covering 119-138 has biased composition (basic and acidic residues); that stretch reads ATEKAEPAFKRMPVPEHRLD.

It is found in the membrane. This is an uncharacterized protein from Rhizobium meliloti (strain 1021) (Ensifer meliloti).